The following is a 359-amino-acid chain: MSLSNNNSNRVAIIGASGYGGLQLMRLLSDHPHFKVTFLGGNKTAGNKWHQIAPFIKSSEDLTVRKADPEDIAEHADFALLSLPNGLSSQLTPELIKRNIRIVDLSADYRYRSLYQWKQVYVKESTKYIRNDDSLCREATYGIPEWNEGDIRKSKLVACPGCFPTASLLPLMPFLKQGLVENEGLIIDAKSGTSGGGREPKEHLLLSECSESIAPYSVLGHRHTSEIEQQATLVSGTPIQLQFTPHLVPMVRGLLSTVYARLRDPGLTAEDCKTVLEAFYRSHSTVEILPVGIYPSTKWARYTNKALLSLQVDKRNGRLILVSVIDNLIKGQAGQAIQNLNIMAGFSHELGLPLTTFYP.

Residue C162 is part of the active site.

It belongs to the NAGSA dehydrogenase family. Type 1 subfamily.

Its subcellular location is the cytoplasm. The enzyme catalyses N-acetyl-L-glutamate 5-semialdehyde + phosphate + NADP(+) = N-acetyl-L-glutamyl 5-phosphate + NADPH + H(+). The protein operates within amino-acid biosynthesis; L-arginine biosynthesis; N(2)-acetyl-L-ornithine from L-glutamate: step 3/4. In terms of biological role, catalyzes the NADPH-dependent reduction of N-acetyl-5-glutamyl phosphate to yield N-acetyl-L-glutamate 5-semialdehyde. This Prochlorococcus marinus (strain MIT 9211) protein is N-acetyl-gamma-glutamyl-phosphate reductase.